We begin with the raw amino-acid sequence, 788 residues long: MARKKRTMPAAEVYEKSDSFGQLPSAPPISPHRMDHIYPDSYGSPPPLHQAYHVQPARANYVPDQIARFNVIKPDRLAKRHNPQLYTKRGCTDVFCCFLFFVFLCGWVVVASLGIMWGDPQRLIYPTDSEFRRCGVDQGGYYNFRYLQFFQIFTNKDIFSKRPYLFYFDLTKCISYATALGGCQTTQICVEECPSQYFSYLQLRTASAAEIQNKMKNVVYCTDDVDKSTVTTFVALQSLVQRGKCVSYTVKSVPVLQRCFPEAIFNAVDNVNTVLNSSNSLDYLKRTFGDDALIPQDIQITGQSSEVMKSVVEDQPVTHKVIHDLSQTWWQTLILIFAAGMLSFIWTVIMRLLGSLLIWLSIFLVLGALGFGAGFSWIKWNNLKATGAIDDYSFHPAFDAYFEMPTTWFVVAIATSVLLVIFLLVILFIRQRISIACALISESSKAIGSMMSTLVFPLFPFLLHIGVFALWGSIAIWLASSGQEICRMKETNGQVYNTSTKCDCNAKLAGCTYVGIEKESDTIFWLQVYNLFAFFWLSCFVTALGDIALAGAFASYYWARDKRHDVPTFPVIRALNRAMRYNLGSIAFGSLIIAIVKIIRVMLEYIDHKLGKSENKAVKWFLMCLKCCFWCLEMFFKFLTKNAYIMIAIYGKNFFSSAKDSFLLITRNIVRTVVVHKVAGILLFLGKAMITLGMGILSFYYFSGRWVVEGVPKVDLYYYFVPIVIVVIGSYFMADLFFDVYEMAVDTTFICFLEDSEQNDGSLERPYFMSQKLLEILGTKNEIPLHTK.

The helical transmembrane segment at 98–118 (FLFFVFLCGWVVVASLGIMWG) threads the bilayer. Residue asparagine 276 is glycosylated (N-linked (GlcNAc...) asparagine). Helical transmembrane passes span 329-349 (WWQT…WTVI), 352-372 (LLGS…LGFG), 409-429 (FVVA…ILFI), and 458-478 (LFPF…AIWL). Asparagine 497 is a glycosylation site (N-linked (GlcNAc...) asparagine). The next 5 helical transmembrane spans lie at 531 to 551 (LFAF…ALAG), 583 to 603 (LGSI…RVML), 620 to 640 (WFLM…KFLT), 679 to 699 (AGIL…ILSF), and 718 to 738 (YYFV…DLFF).

The protein belongs to the CTL (choline transporter-like) family.

It is found in the membrane. This is Choline transporter-like protein 1 (chtl-1) from Caenorhabditis briggsae.